Reading from the N-terminus, the 161-residue chain is Phosphopantetheine adenylyltransferase (161 aa).

Thr-9 is a binding site for substrate. Residues 9–10 (TF) and His-17 each bind ATP. Substrate-binding residues include Lys-41, Leu-73, and Arg-87. Residues 88 to 90 (GLR), Glu-98, and 123 to 129 (YQFISGT) contribute to the ATP site.

Belongs to the bacterial CoaD family. In terms of assembly, homohexamer. The cofactor is Mg(2+).

It is found in the cytoplasm. It catalyses the reaction (R)-4'-phosphopantetheine + ATP + H(+) = 3'-dephospho-CoA + diphosphate. It participates in cofactor biosynthesis; coenzyme A biosynthesis; CoA from (R)-pantothenate: step 4/5. Its function is as follows. Reversibly transfers an adenylyl group from ATP to 4'-phosphopantetheine, yielding dephospho-CoA (dPCoA) and pyrophosphate. This Janthinobacterium sp. (strain Marseille) (Minibacterium massiliensis) protein is Phosphopantetheine adenylyltransferase.